A 332-amino-acid polypeptide reads, in one-letter code: MQIKPPYLLFIGDATDKLSIKMAQSLADWRAELCVGELSVNGCTVSTGLNQCSICEAAKLGAKTFVLGFANSGGVLDKKWLPIISEAIENGMNIVSGLHDKLTNFDELVSLSQKHNTNLLDIRHPSTAFATGKGYKRKGKRLLTVGTDCSVGKMYTSLSLEKAMKEQNIDVDFRATGQCGILISGSGVAIDCVIADFISGAAESLSPDAEETHWDIIEGQGSLSHPAFAGVSLGLLHGSQPDALVICHALNRTHMRGLLHTSFPSIETTIELNIAAAKLTNPDVQVVGISVNTSSVSIEQGNEICERLSQTFGVPCVDPLRDGVDSIVANLC.

This sequence belongs to the N-acetyltransferase DgcN family.

It carries out the reaction D-glutamate + acetyl-CoA = N-acetyl-D-glutamate + CoA + H(+). It catalyses the reaction D-aspartate + acetyl-CoA = N-acetyl-D-aspartate + CoA + H(+). The catalysed reaction is D-glutamine + acetyl-CoA = N-acetyl-D-glutamine + CoA + H(+). The protein operates within amino-acid degradation. Functionally, N-acetyltransferase involved in a deamination-independent D-glutamate degradation pathway, named the DgcN-DgcA pathway. Catalyzes the transfer of the acetyl moiety from acetyl-CoA to D-glutamate to generate N-acetyl-D-glutamate. Can also acetylate D-aspartate and D-glutamine, with lower efficiency. Has low activity with D-asparagine. Cannot use succinyl-CoA. This is D-glutamate N-acetyltransferase from Pseudoalteromonas sp.